The following is a 348-amino-acid chain: Eukaryotic translation initiation factor 3 subunit H (348 aa).

The MPN domain maps to 35–169; it reads VQIDGLVVLK…LKAYRLTPKL (135 aa). Residues 267 to 285 are compositionally biased toward low complexity; the sequence is QQQKHQYQQRRQQENIQRQ. The interval 267 to 311 is disordered; that stretch reads QQQKHQYQQRRQQENIQRQSRGEPPLPEEDINKLFKPPQPPPRME.

Belongs to the eIF-3 subunit H family. As to quaternary structure, component of the eukaryotic translation initiation factor 3 (eIF-3) complex, which is composed of 13 subunits: EIF3A, EIF3B, EIF3C, EIF3D, EIF3E, EIF3F, EIF3G, EIF3H, EIF3I, EIF3J, EIF3K, EIF3L and EIF3M.

It is found in the cytoplasm. In terms of biological role, component of the eukaryotic translation initiation factor 3 (eIF-3) complex, which is involved in protein synthesis of a specialized repertoire of mRNAs and, together with other initiation factors, stimulates binding of mRNA and methionyl-tRNAi to the 40S ribosome. The eIF-3 complex specifically targets and initiates translation of a subset of mRNAs involved in cell proliferation. In Taeniopygia guttata (Zebra finch), this protein is Eukaryotic translation initiation factor 3 subunit H.